Consider the following 126-residue polypeptide: Protein ApaG (126 aa).

Positions 2–126 (SDPRYQIDVS…FRLAVPGALH (125 aa)) constitute an ApaG domain.

This chain is Protein ApaG, found in Pseudomonas putida (strain W619).